A 406-amino-acid chain; its full sequence is 2,3-bisphosphoglycerate-independent phosphoglycerate mutase (406 aa).

Belongs to the BPG-independent phosphoglycerate mutase family. A-PGAM subfamily.

The catalysed reaction is (2R)-2-phosphoglycerate = (2R)-3-phosphoglycerate. It participates in carbohydrate degradation; glycolysis; pyruvate from D-glyceraldehyde 3-phosphate: step 3/5. Catalyzes the interconversion of 2-phosphoglycerate and 3-phosphoglycerate. This is 2,3-bisphosphoglycerate-independent phosphoglycerate mutase from Methanococcus vannielii (strain ATCC 35089 / DSM 1224 / JCM 13029 / OCM 148 / SB).